The primary structure comprises 318 residues: MFTINILLLVIPILLAVAFLTLVERKVLGYMQLRKGPNIVGPYGLLQPIADAIKLFTKEPLQPSTSSTTMFIIAPILALTLALTMWIPLPMPHPLINMNLGVLFMLAMSSLAVYSILWSGWASNSKYALIGALRAVAQTISYEVTLAIILLSVLLMNGSFTLSTLITTQEHLWLIFPSWPLAMMWFISTLAETNRAPFDLAEGESELVSGFNVEYAAGPFALFFMAEYANIIMMNAFTTILFLGAFHNPHMPELYTINFTTKTLLLTTSFLWIRASYPRFRYDQLMHLLWKNFLPLTLALCMWHVSLPITTSSIPPQT.

Helical transmembrane passes span 2–22 (FTIN…FLTL), 70–90 (MFII…IPLP), 100–120 (LGVL…LWSG), 146–166 (LAII…STLI), 171–191 (HLWL…STLA), 222–242 (LFFM…TILF), 254–276 (LYTI…IRAS), and 294–314 (LPLT…TSSI).

This sequence belongs to the complex I subunit 1 family. As to quaternary structure, core subunit of respiratory chain NADH dehydrogenase (Complex I) which is composed of 45 different subunits.

It is found in the mitochondrion inner membrane. It catalyses the reaction a ubiquinone + NADH + 5 H(+)(in) = a ubiquinol + NAD(+) + 4 H(+)(out). In terms of biological role, core subunit of the mitochondrial membrane respiratory chain NADH dehydrogenase (Complex I) which catalyzes electron transfer from NADH through the respiratory chain, using ubiquinone as an electron acceptor. Essential for the catalytic activity and assembly of complex I. This chain is NADH-ubiquinone oxidoreductase chain 1 (MT-ND1), found in Ceratotherium simum (White rhinoceros).